The following is a 247-amino-acid chain: 5-oxoprolinase subunit A (247 aa).

The protein belongs to the LamB/PxpA family. As to quaternary structure, forms a complex composed of PxpA, PxpB and PxpC.

The enzyme catalyses 5-oxo-L-proline + ATP + 2 H2O = L-glutamate + ADP + phosphate + H(+). In terms of biological role, catalyzes the cleavage of 5-oxoproline to form L-glutamate coupled to the hydrolysis of ATP to ADP and inorganic phosphate. The chain is 5-oxoprolinase subunit A from Klebsiella pneumoniae subsp. pneumoniae (strain ATCC 700721 / MGH 78578).